A 239-amino-acid polypeptide reads, in one-letter code: uncharacterized protein (239 aa).

Belongs to the initiator RepB protein family.

In terms of biological role, mutations in ORF 239 affects the incN plasmid pUC1 E.coli polA-independence but not its autonomous replication ability. This is an uncharacterized protein from Escherichia coli.